A 485-amino-acid polypeptide reads, in one-letter code: Glycogen synthase (485 aa).

An ADP-alpha-D-glucose-binding site is contributed by Lys15.

The protein belongs to the glycosyltransferase 1 family. Bacterial/plant glycogen synthase subfamily.

The catalysed reaction is [(1-&gt;4)-alpha-D-glucosyl](n) + ADP-alpha-D-glucose = [(1-&gt;4)-alpha-D-glucosyl](n+1) + ADP + H(+). The protein operates within glycan biosynthesis; glycogen biosynthesis. Its function is as follows. Synthesizes alpha-1,4-glucan chains using ADP-glucose. The protein is Glycogen synthase (glgA) of Geobacillus stearothermophilus (Bacillus stearothermophilus).